We begin with the raw amino-acid sequence, 262 residues long: Large ribosomal subunit protein uL5c (262 aa).

A chloroplast-targeting transit peptide spans 1–39; that stretch reads MASPSLLQSSASSFHGRFSPLAAPSSARMLSPPLRNVVK.

The protein belongs to the universal ribosomal protein uL5 family. In terms of assembly, part of the 50S ribosomal subunit; contacts the 5S rRNA.

Its subcellular location is the plastid. It is found in the chloroplast. In terms of biological role, binds 5S rRNA, forms part of the central protuberance of the 50S subunit. The sequence is that of Large ribosomal subunit protein uL5c (RPL5) from Arabidopsis thaliana (Mouse-ear cress).